The primary structure comprises 732 residues: Wall-associated receptor kinase 2 (732 aa).

Positions 1–23 are cleaved as a signal peptide; the sequence is MKVQEGLFVVAVFYLAYTQLVKG. The Extracellular segment spans residues 24–329; it reads QPRKECQTRC…RKVRPEYFRW (306 aa). 6 N-linked (GlcNAc...) asparagine glycosylation sites follow: N57, N75, N111, N154, N217, and N246. The EGF-like 1 domain maps to 230 to 277; that stretch reads GDKTCKQVEYRGVCGGNSTCFDSTGGTGYNCKCLEGFEGNPYLPNGCQ. 6 disulfides stabilise this stretch: C234-C249, C243-C260, C262-C276, C282-C295, C289-C304, and C306-C318. An EGF-like 2; calcium-binding domain is found at 278–319; it reads DINECISSRHNCSEHSTCENTKGSFNCNCPSGYRKDSLNSCT. N288 carries an N-linked (GlcNAc...) asparagine glycan. Residues 330-350 traverse the membrane as a helical segment; that stretch reads TQIFLGTTIGFSVIMLGISCL. Over 351–732 the chain is Cytoplasmic; sequence QQKIKHRKNT…VTTLDIEAGR (382 aa). T393 is modified (phosphothreonine). The Protein kinase domain occupies 404–677; the sequence is YHESRILGQG…KEVAAELEAL (274 aa). Residues 410–418 and K432 contribute to the ATP site; that span reads LGQGGQGTV. Y477 is modified (phosphotyrosine). The active-site Proton acceptor is D529. Phosphothreonine occurs at positions 563 and 568. Y576 carries the phosphotyrosine modification.

Belongs to the protein kinase superfamily. Ser/Thr protein kinase family. As to expression, predominantly expressed in green tissues such as stems and leaves. Detected at organ junctions.

It is found in the membrane. It catalyses the reaction L-seryl-[protein] + ATP = O-phospho-L-seryl-[protein] + ADP + H(+). It carries out the reaction L-threonyl-[protein] + ATP = O-phospho-L-threonyl-[protein] + ADP + H(+). Its function is as follows. Serine/threonine-protein kinase that may function as a signaling receptor of extracellular matrix component. Binding to pectin may have significance in the control of cell expansion, morphogenesis and development. The sequence is that of Wall-associated receptor kinase 2 (WAK2) from Arabidopsis thaliana (Mouse-ear cress).